A 639-amino-acid polypeptide reads, in one-letter code: ATP-dependent zinc metalloprotease FtsH (639 aa).

The Cytoplasmic portion of the chain corresponds to methionine 1–threonine 4. Residues valine 5–phenylalanine 25 form a helical membrane-spanning segment. Topologically, residues glutamine 26–tryptophan 104 are periplasmic. Residues tryptophan 105–isoleucine 125 traverse the membrane as a helical segment. Residues arginine 126–alanine 639 are Cytoplasmic-facing. Glycine 196–threonine 203 is an ATP binding site. Histidine 418 is a binding site for Zn(2+). Glutamate 419 is a catalytic residue. Residues histidine 422 and aspartate 494 each coordinate Zn(2+). The segment at lysine 597–alanine 639 is disordered.

In the central section; belongs to the AAA ATPase family. It in the C-terminal section; belongs to the peptidase M41 family. As to quaternary structure, homohexamer. It depends on Zn(2+) as a cofactor.

Its subcellular location is the cell inner membrane. In terms of biological role, acts as a processive, ATP-dependent zinc metallopeptidase for both cytoplasmic and membrane proteins. Plays a role in the quality control of integral membrane proteins. In Acidobacterium capsulatum (strain ATCC 51196 / DSM 11244 / BCRC 80197 / JCM 7670 / NBRC 15755 / NCIMB 13165 / 161), this protein is ATP-dependent zinc metalloprotease FtsH.